We begin with the raw amino-acid sequence, 1070 residues long: DNA-directed RNA polymerase subunit beta (1070 aa).

It belongs to the RNA polymerase beta chain family. In terms of assembly, in plastids the minimal PEP RNA polymerase catalytic core is composed of four subunits: alpha, beta, beta', and beta''. When a (nuclear-encoded) sigma factor is associated with the core the holoenzyme is formed, which can initiate transcription.

Its subcellular location is the plastid. The protein resides in the chloroplast. It carries out the reaction RNA(n) + a ribonucleoside 5'-triphosphate = RNA(n+1) + diphosphate. Functionally, DNA-dependent RNA polymerase catalyzes the transcription of DNA into RNA using the four ribonucleoside triphosphates as substrates. This Dioscorea elephantipes (Elephant's foot yam) protein is DNA-directed RNA polymerase subunit beta.